We begin with the raw amino-acid sequence, 317 residues long: Glucokinase (317 aa).

6-12 contributes to the ATP binding site; that stretch reads GVDIGGT.

The protein belongs to the ROK (NagC/XylR) family. Homooligomer (possibly a homotetramer). Alternatively, it may form a heterotetramer of two glucokinase subunits with two ORF2 (AC P40182) proteins.

It is found in the cytoplasm. The enzyme catalyses D-glucose + ATP = D-glucose 6-phosphate + ADP + H(+). In terms of biological role, a probable glucose kinase. Required for glucose repression of many different genes, restores glucose kinase activity in E.coli glk mutants. This chain is Glucokinase (glkA), found in Streptomyces coelicolor (strain ATCC BAA-471 / A3(2) / M145).